A 277-amino-acid chain; its full sequence is uncharacterized protein (277 aa).

Residues His-256–Ser-277 form a disordered region.

This protein may be involved in virus assembly. Essential for virus function. This is an uncharacterized protein from Saccharolobus solfataricus (Sulfolobus solfataricus).